We begin with the raw amino-acid sequence, 329 residues long: Diaminopimelate epimerase (329 aa).

Positions 14 and 73 each coordinate substrate. Cys82 functions as the Proton donor in the catalytic mechanism. Residues 83-84, Asn170, Asn206, and 224-225 each bind substrate; these read GN and ER. The active-site Proton acceptor is Cys233. 234 to 235 lines the substrate pocket; sequence GT.

The protein belongs to the diaminopimelate epimerase family. As to quaternary structure, homodimer.

It localises to the cytoplasm. It catalyses the reaction (2S,6S)-2,6-diaminopimelate = meso-2,6-diaminopimelate. It functions in the pathway amino-acid biosynthesis; L-lysine biosynthesis via DAP pathway; DL-2,6-diaminopimelate from LL-2,6-diaminopimelate: step 1/1. Catalyzes the stereoinversion of LL-2,6-diaminopimelate (L,L-DAP) to meso-diaminopimelate (meso-DAP), a precursor of L-lysine and an essential component of the bacterial peptidoglycan. The polypeptide is Diaminopimelate epimerase (Listeria innocua serovar 6a (strain ATCC BAA-680 / CLIP 11262)).